The chain runs to 90 residues: Translation initiation factor IF-1 (90 aa).

The 76-residue stretch at 15-90 (KKQKRKKEEV…TLGRIVFRHK (76 aa)) folds into the S1-like domain.

The protein belongs to the IF-1 family. Component of the 30S ribosomal translation pre-initiation complex which assembles on the 30S ribosome in the order IF-2 and IF-3, IF-1 and N-formylmethionyl-tRNA(fMet); mRNA recruitment can occur at any time during PIC assembly.

It localises to the cytoplasm. One of the essential components for the initiation of protein synthesis. Stabilizes the binding of IF-2 and IF-3 on the 30S subunit to which N-formylmethionyl-tRNA(fMet) subsequently binds. Helps modulate mRNA selection, yielding the 30S pre-initiation complex (PIC). Upon addition of the 50S ribosomal subunit IF-1, IF-2 and IF-3 are released leaving the mature 70S translation initiation complex. This is Translation initiation factor IF-1 from Mycoplasma sp.